Consider the following 626-residue polypeptide: Procollagen galactosyltransferase 2 (626 aa).

A signal peptide spans 1–27 (MAARPAATLAWSLLLLSSALLREGCRA). 4 N-linked (GlcNAc...) asparagine glycosylation sites follow: asparagine 97, asparagine 185, asparagine 382, and asparagine 580. Residues 604–626 (NAKNTEALPPPTSLDTVPSRDEL) are disordered. Positions 623-626 (RDEL) match the Prevents secretion from ER motif.

The protein belongs to the glycosyltransferase 25 family. As to expression, expressed in brain and skeletal muscle.

The protein resides in the endoplasmic reticulum lumen. The catalysed reaction is (5R)-5-hydroxy-L-lysyl-[collagen] + UDP-alpha-D-galactose = (5R)-5-O-(beta-D-galactosyl)-5-hydroxy-L-lysyl-[collagen] + UDP + H(+). In terms of biological role, beta-galactosyltransferase that transfers beta-galactose to hydroxylysine residues of collagen. The chain is Procollagen galactosyltransferase 2 (COLGALT2) from Homo sapiens (Human).